The primary structure comprises 255 residues: tRNA pseudouridine synthase A (255 aa).

The active-site Nucleophile is the Asp-53. Position 113 (Tyr-113) interacts with substrate.

The protein belongs to the tRNA pseudouridine synthase TruA family. In terms of assembly, homodimer.

The catalysed reaction is uridine(38/39/40) in tRNA = pseudouridine(38/39/40) in tRNA. Its function is as follows. Formation of pseudouridine at positions 38, 39 and 40 in the anticodon stem and loop of transfer RNAs. In Acidiphilium cryptum (strain JF-5), this protein is tRNA pseudouridine synthase A.